The following is a 444-amino-acid chain: P2X purinoceptor 5 (444 aa).

The Cytoplasmic segment spans residues 1–30; the sequence is MGQAGCKGLCLSLFDYKTEKYVIAKNKKVG. The chain crosses the membrane as a helical span at residues 31–51; it reads LLYRLLQASILAYLVVWVFLI. Residues 52-319 lie on the Extracellular side of the membrane; it reads KKGYQDVDTS…RTLMKAYGIR (268 aa). The N-linked (GlcNAc...) asparagine glycan is linked to N77. 3 cysteine pairs are disulfide-bonded: C118-C169, C129-C152, and C135-C163. A glycan (N-linked (GlcNAc...) asparagine) is linked at N202. Disulfide bonds link C220–C229 and C263–C272. A helical membrane pass occupies residues 320-362; that stretch reads FDVMVNGKAGKFSIIPTIINVGSGVALMGAGAFFCDLVLIYLI. Over 363–444 the chain is Cytoplasmic; it reads KKREFYRDKK…PQLLEPHRST (82 aa). The disordered stretch occupies residues 378 to 444; the sequence is GLEDSSQEAE…PQLLEPHRST (67 aa).

The protein belongs to the P2X receptor family. Functional P2XRs are organized as homomeric and heteromeric trimers. Homotrimer. Forms heterotrimer with P2RX1. Expressed at high levels in brain and immune system.

It is found in the cell membrane. The enzyme catalyses Na(+)(in) = Na(+)(out). The catalysed reaction is Ca(2+)(in) = Ca(2+)(out). It catalyses the reaction chloride(in) = chloride(out). With respect to regulation, activated by ATP. Slowly desensitizing. Sensitive to the ATP agonist alpha/beta-methylene-ATP. ATP-gated nonselective transmembrane cation channel permeable to potassium, sodium and calcium. Unlike other P2RX receptors, the P2X5 receptor is also permeable to chloride. May play a supporting role in the inflammatory response. Functionally, non-functional. This Homo sapiens (Human) protein is P2X purinoceptor 5.